We begin with the raw amino-acid sequence, 91 residues long: Small ribosomal subunit protein uS19 (91 aa).

It belongs to the universal ribosomal protein uS19 family.

Its function is as follows. Protein S19 forms a complex with S13 that binds strongly to the 16S ribosomal RNA. The sequence is that of Small ribosomal subunit protein uS19 from Dechloromonas aromatica (strain RCB).